The chain runs to 209 residues: Uracil phosphoribosyltransferase (209 aa).

5-phospho-alpha-D-ribose 1-diphosphate-binding positions include Arg-79, Arg-104, and 131-139 (DPMLATGGS). Uracil is bound by residues Ile-194 and 199 to 201 (GDA). A 5-phospho-alpha-D-ribose 1-diphosphate-binding site is contributed by Asp-200.

Belongs to the UPRTase family. The cofactor is Mg(2+).

It catalyses the reaction UMP + diphosphate = 5-phospho-alpha-D-ribose 1-diphosphate + uracil. It functions in the pathway pyrimidine metabolism; UMP biosynthesis via salvage pathway; UMP from uracil: step 1/1. Its activity is regulated as follows. Allosterically activated by GTP. Catalyzes the conversion of uracil and 5-phospho-alpha-D-ribose 1-diphosphate (PRPP) to UMP and diphosphate. The sequence is that of Uracil phosphoribosyltransferase from Streptococcus pneumoniae serotype 4 (strain ATCC BAA-334 / TIGR4).